A 528-amino-acid chain; its full sequence is Protein MGF 505-7R (528 aa).

2 ANK repeats span residues 54-83 and 261-291; these read SIND…NLHY and NIHR…PPNT.

The protein belongs to the asfivirus MGF 505 family. In terms of assembly, interacts with host STING1. Interacts with host JAK1; this interaction leads to JAK1 degradation. Interacts with host JAK2; this interaction leads to JAK2 degradation. Interacts with host RELA; this interaction inhibits NF-kappa-B promoter activity.

Its subcellular location is the host cytoplasm. In terms of biological role, plays a role in virus cell tropism, and may be required for efficient virus replication in macrophages. Interferes with host NF-kappa-B promoter activity mediated by TLR8. Mechanistically, inhibits the phosphorylation and subsequent nuclear translocation of host NF-kappa-B RELA subunit downstream of TLR8. Promotes the expression of the autophagy-related protein host ULK1 to degrade host STING and inhibit the interferon response. Also inhibits JAK1- and JAK2-mediated signaling and thus negatively regulates the IFN-gamma signaling. The polypeptide is Protein MGF 505-7R (African swine fever virus (isolate Tick/Malawi/Lil 20-1/1983) (ASFV)).